A 190-amino-acid chain; its full sequence is Elongation factor P (190 aa).

This sequence belongs to the elongation factor P family.

The protein localises to the cytoplasm. Its pathway is protein biosynthesis; polypeptide chain elongation. Functionally, involved in peptide bond synthesis. Stimulates efficient translation and peptide-bond synthesis on native or reconstituted 70S ribosomes in vitro. Probably functions indirectly by altering the affinity of the ribosome for aminoacyl-tRNA, thus increasing their reactivity as acceptors for peptidyl transferase. The chain is Elongation factor P from Sulfurihydrogenibium sp. (strain YO3AOP1).